The primary structure comprises 705 residues: Elongation factor G (705 aa).

The tr-type G domain maps to 8 to 294 (NLYRNFGIMA…AVIDYLPSPL (287 aa)). GTP is bound by residues 17 to 24 (AHIDAGKT), 92 to 96 (DTPGH), and 146 to 149 (NKMD).

The protein belongs to the TRAFAC class translation factor GTPase superfamily. Classic translation factor GTPase family. EF-G/EF-2 subfamily.

It is found in the cytoplasm. Its function is as follows. Catalyzes the GTP-dependent ribosomal translocation step during translation elongation. During this step, the ribosome changes from the pre-translocational (PRE) to the post-translocational (POST) state as the newly formed A-site-bound peptidyl-tRNA and P-site-bound deacylated tRNA move to the P and E sites, respectively. Catalyzes the coordinated movement of the two tRNA molecules, the mRNA and conformational changes in the ribosome. This is Elongation factor G from Ruegeria pomeroyi (strain ATCC 700808 / DSM 15171 / DSS-3) (Silicibacter pomeroyi).